Consider the following 341-residue polypeptide: Tetraacyldisaccharide 4'-kinase (341 aa).

54–61 (TVGGAGKT) lines the ATP pocket.

It belongs to the LpxK family.

It carries out the reaction a lipid A disaccharide + ATP = a lipid IVA + ADP + H(+). Its pathway is glycolipid biosynthesis; lipid IV(A) biosynthesis; lipid IV(A) from (3R)-3-hydroxytetradecanoyl-[acyl-carrier-protein] and UDP-N-acetyl-alpha-D-glucosamine: step 6/6. Its function is as follows. Transfers the gamma-phosphate of ATP to the 4'-position of a tetraacyldisaccharide 1-phosphate intermediate (termed DS-1-P) to form tetraacyldisaccharide 1,4'-bis-phosphate (lipid IVA). The chain is Tetraacyldisaccharide 4'-kinase from Brucella anthropi (strain ATCC 49188 / DSM 6882 / CCUG 24695 / JCM 21032 / LMG 3331 / NBRC 15819 / NCTC 12168 / Alc 37) (Ochrobactrum anthropi).